A 366-amino-acid polypeptide reads, in one-letter code: Acetylserotonin O-methyltransferase 2 (366 aa).

Residues Gly-209, Asp-232, Asp-253, and Lys-267 each coordinate S-adenosyl-L-homocysteine. Catalysis depends on His-271, which acts as the Proton acceptor. Active-site residues include Glu-302 and Glu-332.

Belongs to the class I-like SAM-binding methyltransferase superfamily. Cation-independent O-methyltransferase family. In terms of assembly, homodimer. In terms of tissue distribution, expressed in roots, leaves, stems and flowers.

It localises to the cytoplasm. The catalysed reaction is N-acetylserotonin + S-adenosyl-L-methionine = melatonin + S-adenosyl-L-homocysteine + H(+). Its pathway is aromatic compound metabolism; melatonin biosynthesis; melatonin from serotonin: step 1/2. Functionally, methyltransferase which catalyzes the transfer of a methyl group onto N-acetylserotonin, producing melatonin (N-acetyl-5-methoxytryptamine). The polypeptide is Acetylserotonin O-methyltransferase 2 (Oryza sativa subsp. japonica (Rice)).